The chain runs to 350 residues: Galactokinase (350 aa).

14–17 lines the substrate pocket; it reads EHTD. ATP contacts are provided by residues Ser-46 and 96–102; that span reads GAGLSSS. Positions 102 and 134 each coordinate Mg(2+). Catalysis depends on Asp-146, which acts as the Proton acceptor. Residue Tyr-196 participates in substrate binding.

Belongs to the GHMP kinase family. GalK subfamily.

It localises to the cytoplasm. The enzyme catalyses alpha-D-galactose + ATP = alpha-D-galactose 1-phosphate + ADP + H(+). It functions in the pathway carbohydrate metabolism; galactose metabolism. Functionally, catalyzes the transfer of the gamma-phosphate of ATP to D-galactose to form alpha-D-galactose-1-phosphate (Gal-1-P). The protein is Galactokinase of Thermotoga neapolitana (strain ATCC 49049 / DSM 4359 / NBRC 107923 / NS-E).